Consider the following 603-residue polypeptide: UPF0313 protein MJ1155 (603 aa).

A Radical SAM core domain is found at 285-557 (GIVPVQFSVV…KIQKAICLYR (273 aa)). [4Fe-4S] cluster contacts are provided by Cys-299, Cys-303, and Cys-306.

Belongs to the UPF0313 family. [4Fe-4S] cluster serves as cofactor.

In Methanocaldococcus jannaschii (strain ATCC 43067 / DSM 2661 / JAL-1 / JCM 10045 / NBRC 100440) (Methanococcus jannaschii), this protein is UPF0313 protein MJ1155.